A 206-amino-acid polypeptide reads, in one-letter code: Small ribosomal subunit protein uS7 (206 aa).

A compositionally biased stretch (acidic residues) spans 1-19; sequence MSAEDTPEADADAAEESEP. Residues 1–25 form a disordered region; that stretch reads MSAEDTPEADADAAEESEPETARAK. At S2 the chain carries N-acetylserine.

It belongs to the universal ribosomal protein uS7 family. As to quaternary structure, part of the 30S ribosomal subunit.

In terms of biological role, one of the primary rRNA binding proteins, it binds directly to 16S rRNA where it nucleates assembly of the head domain of the 30S subunit. Is located at the subunit interface close to the decoding center. This chain is Small ribosomal subunit protein uS7, found in Haloarcula marismortui (strain ATCC 43049 / DSM 3752 / JCM 8966 / VKM B-1809) (Halobacterium marismortui).